A 150-amino-acid chain; its full sequence is Developmental pluripotency-associated protein 3 (150 aa).

Residues 1–22 (MEEPSEKVDPMKDPETPQKKDE) show a composition bias toward basic and acidic residues. Positions 1-32 (MEEPSEKVDPMKDPETPQKKDEEDALDDTDVL) are disordered. Residues 1 to 75 (MEEPSEKVDP…VPVENKSEKI (75 aa)) form a required for H3K9me2-binding region. A required to exclude TET3 from the maternal pronucleus region spans residues 76-150 (RREVQSAFPK…PSENAKIGKN (75 aa)).

In terms of tissue distribution, expressed in the immature oocytes and in newborn ovaries. Subsequently detected in maturing oocytes and in preimplantation embryos. Expressed in pluripotent embryonic but not in differentiated somatic cells. Expressed in blastocysts, epiblasts, primordial germ cells, embryonic gonads and primitive spermatogonia. No expression is detected in adult testes.

The protein resides in the nucleus. Its subcellular location is the cytoplasm. Its function is as follows. Primordial germ cell (PGCs)-specific protein involved in epigenetic chromatin reprogramming in the zygote following fertilization. In zygotes, DNA demethylation occurs selectively in the paternal pronucleus before the first cell division, while the adjacent maternal pronucleus and certain paternally-imprinted loci are protected from this process. Participates in protection of DNA methylation in the maternal pronucleus by preventing conversion of 5mC to 5hmC: specifically recognizes and binds histone H3 dimethylated at 'Lys-9' (H3K9me2) on maternal genome, and protects maternal genome from TET3-mediated conversion to 5hmC and subsequent DNA demethylation. Does not bind paternal chromatin, which is mainly packed into protamine and does not contain much H3K9me2 mark. Also protects imprinted loci that are marked with H3K9me2 in mature sperm from DNA demethylation in early embryogenesis. May be important for the totipotent/pluripotent states continuing through preimplantation development. Also involved in chromatin condensation in oocytogenesis. The polypeptide is Developmental pluripotency-associated protein 3 (Dppa3) (Mus musculus (Mouse)).